A 344-amino-acid chain; its full sequence is Phenylalanine--tRNA ligase alpha subunit (344 aa).

Glu259 provides a ligand contact to Mg(2+).

This sequence belongs to the class-II aminoacyl-tRNA synthetase family. Phe-tRNA synthetase alpha subunit type 1 subfamily. In terms of assembly, tetramer of two alpha and two beta subunits. Mg(2+) is required as a cofactor.

It localises to the cytoplasm. The catalysed reaction is tRNA(Phe) + L-phenylalanine + ATP = L-phenylalanyl-tRNA(Phe) + AMP + diphosphate + H(+). The protein is Phenylalanine--tRNA ligase alpha subunit of Nitrosospira multiformis (strain ATCC 25196 / NCIMB 11849 / C 71).